A 326-amino-acid chain; its full sequence is Beta-ketoacyl-[acyl-carrier-protein] synthase III (326 aa).

Residues Cys-116 and His-253 contribute to the active site. Residues 254–258 (QANIR) are ACP-binding. The active site involves Asn-283.

The protein belongs to the thiolase-like superfamily. FabH family. As to quaternary structure, homodimer.

Its subcellular location is the cytoplasm. It catalyses the reaction malonyl-[ACP] + acetyl-CoA + H(+) = 3-oxobutanoyl-[ACP] + CO2 + CoA. Its pathway is lipid metabolism; fatty acid biosynthesis. Catalyzes the condensation reaction of fatty acid synthesis by the addition to an acyl acceptor of two carbons from malonyl-ACP. Catalyzes the first condensation reaction which initiates fatty acid synthesis and may therefore play a role in governing the total rate of fatty acid production. Possesses both acetoacetyl-ACP synthase and acetyl transacylase activities. Its substrate specificity determines the biosynthesis of branched-chain and/or straight-chain of fatty acids. The protein is Beta-ketoacyl-[acyl-carrier-protein] synthase III of Jannaschia sp. (strain CCS1).